Here is a 360-residue protein sequence, read N- to C-terminus: DNA replication and repair protein RecF (360 aa).

30 to 37 contributes to the ATP binding site; it reads GHNGSGKT.

Belongs to the RecF family.

The protein resides in the cytoplasm. In terms of biological role, the RecF protein is involved in DNA metabolism; it is required for DNA replication and normal SOS inducibility. RecF binds preferentially to single-stranded, linear DNA. It also seems to bind ATP. This chain is DNA replication and repair protein RecF, found in Shewanella denitrificans (strain OS217 / ATCC BAA-1090 / DSM 15013).